The chain runs to 412 residues: Serine hydroxymethyltransferase (412 aa).

(6S)-5,6,7,8-tetrahydrofolate is bound by residues Leu125 and 129–131 (GHL). Lys234 is modified (N6-(pyridoxal phosphate)lysine). Residue Glu250 participates in (6S)-5,6,7,8-tetrahydrofolate binding.

The protein belongs to the SHMT family. As to quaternary structure, homodimer. Pyridoxal 5'-phosphate serves as cofactor.

It is found in the cytoplasm. The enzyme catalyses (6R)-5,10-methylene-5,6,7,8-tetrahydrofolate + glycine + H2O = (6S)-5,6,7,8-tetrahydrofolate + L-serine. It functions in the pathway one-carbon metabolism; tetrahydrofolate interconversion. The protein operates within amino-acid biosynthesis; glycine biosynthesis; glycine from L-serine: step 1/1. Functionally, catalyzes the reversible interconversion of serine and glycine with tetrahydrofolate (THF) serving as the one-carbon carrier. This reaction serves as the major source of one-carbon groups required for the biosynthesis of purines, thymidylate, methionine, and other important biomolecules. Also exhibits THF-independent aldolase activity toward beta-hydroxyamino acids, producing glycine and aldehydes, via a retro-aldol mechanism. The protein is Serine hydroxymethyltransferase of Deinococcus geothermalis (strain DSM 11300 / CIP 105573 / AG-3a).